A 572-amino-acid chain; its full sequence is Dityrosine transporter 1 (572 aa).

Disordered regions lie at residues 1-28 (MGSE…STFH) and 49-95 (RANI…SPDT). Topologically, residues 1 to 110 (MGSEPFQKKN…YTYFSKDQRL (110 aa)) are cytoplasmic. The segment covering 13–28 (LQINSQESGTTRSTFH) has biased composition (polar residues). Residues 50–62 (ANIDHDVFHEHPD) show a composition bias toward basic and acidic residues. A compositionally biased stretch (polar residues) spans 83 to 95 (SSNSQSRDPSPDT). Residues 111-131 (IIFGIIIFIGFLGPMSGNIYI) form a helical membrane-spanning segment. At 132–149 (PALPLLQREYDVSATTIN) the chain is on the extracellular side. The chain crosses the membrane as a helical span at residues 150–170 (ATVSVFMAVFSVGPLFWGALA). Residues 171-184 (DFGGRKFLYMVSLS) lie on the Cytoplasmic side of the membrane. A helical membrane pass occupies residues 185 to 205 (LMLIVNILLAAVPVNIAALFV). Residues 206–207 (LR) are Extracellular-facing. Residues 208–228 (IFQAFASSSVISLGAGTVTDV) form a helical membrane-spanning segment. Topologically, residues 229-240 (VPPKHRGKAIAY) are cytoplasmic. Residues 241–261 (FMMGPNMGPIIAPIVAGLILM) traverse the membrane as a helical segment. Topologically, residues 262–267 (KGNYWR) are extracellular. The chain crosses the membrane as a helical span at residues 268 to 288 (WLFGFTSIMTGIALILVTALL). Over 289 to 366 (PETLRCIVGN…TLYWKMIKCP (78 aa)) the chain is Cytoplasmic. Residues 367–387 (PIIITSVSTALLFSSYYAFSV) form a helical membrane-spanning segment. The Extracellular segment spans residues 388 to 398 (TFSYYLEHDYR). Residues 399-419 (FTMLEIGAAYVCPGVAMLLGS) form a helical membrane-spanning segment. Residues 420–446 (QSGGHLSDYLRSRWIKSHPKKKFPAEF) are Cytoplasmic-facing. Residues 447–469 (RLLLNLIGILLTICGTIGYGWAI) form a helical membrane-spanning segment. Residues 470–472 (FFH) lie on the Extracellular side of the membrane. A helical transmembrane segment spans residues 473–493 (YHFVVLLVFSALTAFGMTWCS). Over 494–520 (NTSMTYLTELFPKRAAGTVAVSSFFRN) the chain is Cytoplasmic. The helical transmembrane segment at 521–541 (VGAAISSAIILQLCNAMGIGW) threads the bilayer. Residue Cys-542 is a topological domain, extracellular. The chain crosses the membrane as a helical span at residues 543-563 (FTGLGLCSSISLIGILYLLIF). The segment at 548–572 (LCSSISLIGILYLLIFQRKYTAKEF) is required for the localization to the prospore membrane. Residues 564-572 (QRKYTAKEF) are Cytoplasmic-facing.

The protein belongs to the major facilitator superfamily. CAR1 family. Post-translationally, phosphorylated.

Its subcellular location is the prospore membrane. Prospore-specific dityrosine transporter responsible for translocation of dityrosine through the prospore membrane and required for the formation of the outermost layer of the spore. The sequence is that of Dityrosine transporter 1 (DTR1) from Saccharomyces cerevisiae (strain ATCC 204508 / S288c) (Baker's yeast).